We begin with the raw amino-acid sequence, 56 residues long: LLFPLSALPLDGDQPADQPAERMQDISPEQNFWFDLVERGCCTIWNCVQLPGCPCC.

An N-terminal signal peptide occupies residues 1 to 8 (LLFPLSAL). Residues 1 to 22 (LLFPLSALPLDGDQPADQPAER) form a disordered region. Residues 9-40 (PLDGDQPADQPAERMQDISPEQNFWFDLVERG) constitute a propeptide that is removed on maturation. Cystine bridges form between Cys41–Cys55, Cys42–Cys53, and Cys47–Cys56.

The protein belongs to the conotoxin M superfamily. In terms of tissue distribution, expressed by the venom duct.

The protein localises to the secreted. The protein is Conotoxin reg3.9 of Conus regius (Crown cone).